An 868-amino-acid polypeptide reads, in one-letter code: DNA topoisomerase 1 (868 aa).

Positions 3–147 (KSLVIVESPA…RYKRVVFNEI (145 aa)) constitute a Toprim domain. Position 9 (glutamate 9) interacts with Mg(2+). A disordered region spans residues 34–70 (IRDLPTSGSSSSKEPAAKGRKSASEAPALSPKEKARR). Position 116 (aspartate 116) interacts with Mg(2+). The Topo IA-type catalytic domain maps to 163 to 580 (DINRVNAQQA…EFYGDFKKKL (418 aa)). The interaction with DNA stretch occupies residues 197–202 (SAGRVQ). Tyrosine 324 acts as the O-(5'-phospho-DNA)-tyrosine intermediate in catalysis. 3 consecutive C4-type zinc fingers follow at residues 602–633 (CREC…KERC), 664–691 (CPIC…NPDC), and 713–738 (CDKC…NPTC).

The protein belongs to the type IA topoisomerase family. In terms of assembly, monomer. Requires Mg(2+) as cofactor.

The enzyme catalyses ATP-independent breakage of single-stranded DNA, followed by passage and rejoining.. Functionally, releases the supercoiling and torsional tension of DNA, which is introduced during the DNA replication and transcription, by transiently cleaving and rejoining one strand of the DNA duplex. Introduces a single-strand break via transesterification at a target site in duplex DNA. The scissile phosphodiester is attacked by the catalytic tyrosine of the enzyme, resulting in the formation of a DNA-(5'-phosphotyrosyl)-enzyme intermediate and the expulsion of a 3'-OH DNA strand. The free DNA strand then undergoes passage around the unbroken strand, thus removing DNA supercoils. Finally, in the religation step, the DNA 3'-OH attacks the covalent intermediate to expel the active-site tyrosine and restore the DNA phosphodiester backbone. This is DNA topoisomerase 1 from Pseudomonas aeruginosa (strain ATCC 15692 / DSM 22644 / CIP 104116 / JCM 14847 / LMG 12228 / 1C / PRS 101 / PAO1).